A 469-amino-acid polypeptide reads, in one-letter code: A-type ATP synthase subunit B 3 (469 aa).

It belongs to the ATPase alpha/beta chains family. In terms of assembly, has multiple subunits with at least A(3), B(3), C, D, E, F, H, I and proteolipid K(x).

It localises to the cell membrane. Its function is as follows. Component of the A-type ATP synthase that produces ATP from ADP in the presence of a proton gradient across the membrane. The B chain is a regulatory subunit. This chain is A-type ATP synthase subunit B 3, found in Methanospirillum hungatei JF-1 (strain ATCC 27890 / DSM 864 / NBRC 100397 / JF-1).